The chain runs to 65 residues: Antitoxin VapB32 (65 aa).

The tract at residues Ala46–Arg65 is disordered.

In terms of biological role, antitoxin component of a type II toxin-antitoxin (TA) system. The sequence is that of Antitoxin VapB32 (vapB32) from Mycobacterium tuberculosis (strain CDC 1551 / Oshkosh).